We begin with the raw amino-acid sequence, 362 residues long: Oxygen-dependent coproporphyrinogen-III oxidase (362 aa).

Residue Ser118 participates in substrate binding. A divalent metal cation contacts are provided by His122 and His132. His132 (proton donor) is an active-site residue. 134-136 (NYR) lines the substrate pocket. A divalent metal cation contacts are provided by His166 and His196. Positions 286–321 (YVEFNLVWDRGTIFGLQTNGRTESILMSLPPLVRWE) are important for dimerization.

Belongs to the aerobic coproporphyrinogen-III oxidase family. In terms of assembly, homodimer. A divalent metal cation is required as a cofactor.

Its subcellular location is the cytoplasm. It carries out the reaction coproporphyrinogen III + O2 + 2 H(+) = protoporphyrinogen IX + 2 CO2 + 2 H2O. The protein operates within porphyrin-containing compound metabolism; protoporphyrin-IX biosynthesis; protoporphyrinogen-IX from coproporphyrinogen-III (O2 route): step 1/1. Involved in the heme and chlorophyll biosynthesis. Catalyzes the aerobic oxidative decarboxylation of propionate groups of rings A and B of coproporphyrinogen-III to yield the vinyl groups in protoporphyrinogen-IX. The protein is Oxygen-dependent coproporphyrinogen-III oxidase of Synechococcus sp. (strain CC9605).